An 87-amino-acid polypeptide reads, in one-letter code: Small ribosomal subunit protein bS18 (87 aa).

The protein belongs to the bacterial ribosomal protein bS18 family. In terms of assembly, part of the 30S ribosomal subunit. Forms a tight heterodimer with protein bS6.

Its function is as follows. Binds as a heterodimer with protein bS6 to the central domain of the 16S rRNA, where it helps stabilize the platform of the 30S subunit. The polypeptide is Small ribosomal subunit protein bS18 (Mesomycoplasma hyopneumoniae (strain 232) (Mycoplasma hyopneumoniae)).